The primary structure comprises 268 residues: Orotidine 5'-phosphate decarboxylase (268 aa).

Residues Asp-39, 61–63 (KTH), 93–102 (DRKFADIGNT), Tyr-219, and Arg-237 each bind substrate. Lys-95 functions as the Proton donor in the catalytic mechanism.

Belongs to the OMP decarboxylase family.

The catalysed reaction is orotidine 5'-phosphate + H(+) = UMP + CO2. The protein operates within pyrimidine metabolism; UMP biosynthesis via de novo pathway; UMP from orotate: step 2/2. The polypeptide is Orotidine 5'-phosphate decarboxylase (URA3) (Pachysolen tannophilus (Yeast)).